We begin with the raw amino-acid sequence, 467 residues long: MAQTLYDKLWDAHVVHQESDGTCMLYIDRHLLHEVTSPQAFEGLALAGRQPWRVGANLAVADHNVPTLNRAQGIEDPISRLQVDTLDDNCAKYGITEFRMNDLRQGIVHVIGPEQGATLPGMTVVCGDSHTSTHGALGALAFGIGTSEVEHVLATQTLLMKKAKSMQINVEGELPFGCTAKDVVLHIIGIIGTAGGTGHAIEFSGSTIRGLSVEGRMTVCNMAIEAGARSGMVAVDDKTIDYFRGRPFAPVGVLWDQAVGYWRTLHSDAGARFDRVINVDARDIKPQVTWGTSPEMVLPVDGRVPDPDREKDDVRRSGMERALEYMGLKPNTPLVDIRVDRVFIGSCTNSRIEDLRAAAVVARGKRVAANVRQAMVVPGSGLVKQQAEREGLDKIFIEAGFEWREPGCSMCLAMNADRLEPGERCASTSNRNFEGRQGQGGRTHLVSPAMAAAAAVAGHFVDVRSFR.

[4Fe-4S] cluster contacts are provided by C347, C408, and C411.

Belongs to the aconitase/IPM isomerase family. LeuC type 1 subfamily. Heterodimer of LeuC and LeuD. [4Fe-4S] cluster is required as a cofactor.

It carries out the reaction (2R,3S)-3-isopropylmalate = (2S)-2-isopropylmalate. It participates in amino-acid biosynthesis; L-leucine biosynthesis; L-leucine from 3-methyl-2-oxobutanoate: step 2/4. In terms of biological role, catalyzes the isomerization between 2-isopropylmalate and 3-isopropylmalate, via the formation of 2-isopropylmaleate. The protein is 3-isopropylmalate dehydratase large subunit of Bordetella pertussis (strain Tohama I / ATCC BAA-589 / NCTC 13251).